A 712-amino-acid chain; its full sequence is Polyribonucleotide nucleotidyltransferase (712 aa).

Residues Asp-487 and Asp-493 each coordinate Mg(2+). One can recognise a KH domain in the interval 554-613 (PRIEVMNIPVDKIREVIGSGGKVIREIVEKTGAKINIEDDGTVKIASSSGKEIEAARKWI). Residues 623 to 691 (GQIYEGTVVK…ERGKVRLSMK (69 aa)) form the S1 motif domain.

This sequence belongs to the polyribonucleotide nucleotidyltransferase family. Mg(2+) is required as a cofactor.

Its subcellular location is the cytoplasm. The enzyme catalyses RNA(n+1) + phosphate = RNA(n) + a ribonucleoside 5'-diphosphate. Involved in mRNA degradation. Catalyzes the phosphorolysis of single-stranded polyribonucleotides processively in the 3'- to 5'-direction. In Rhizobium etli (strain ATCC 51251 / DSM 11541 / JCM 21823 / NBRC 15573 / CFN 42), this protein is Polyribonucleotide nucleotidyltransferase.